The sequence spans 285 residues: MSQQHTLPVTLPPALSQGPLKPESPPIDTQQEQVKQPTSLPVLCQKMPSSLPGKVPLGHGEKHTSLVKGEPEQQCEPQEQEQQQKQQESQEQKLHLEQCLEQHQEQQESQDQKLYPEQCLEQQQEQQESQDQKLYPEQCLEQQQEQQESQEKELHLEQEQQKEELQQQEQQQGKEQCEKHQEAKNLEQQLEQIGAQRKQQQKEQLEQEKKLVDQHLDQEPAQRTEQPEKKEEQVLEQQGQQEGQLEQPAFVPAQVQVREPLKGEVLPLIEQQHQKQEVHDPPEHQ.

Disordered stretches follow at residues 1-93 (MSQQ…QEQK), 120-256 (LEQQ…AQVQ), and 266-285 (LPLI…PEHQ). The segment covering 27–39 (IDTQQEQVKQPTS) has biased composition (polar residues). Low complexity-rich tracts occupy residues 72–87 (EQQC…QKQQ), 120–129 (LEQQQEQQES), and 137–147 (EQCLEQQQEQQ). 3 stretches are compositionally biased toward basic and acidic residues: residues 149-165 (SQEK…KEEL), 175-185 (EQCEKHQEAKN), and 200-233 (QQKE…KEEQ). Low complexity predominate over residues 235 to 248 (LEQQGQQEGQLEQP). The span at 272–285 (QHQKQEVHDPPEHQ) shows a compositional bias: basic and acidic residues.

This sequence belongs to the involucrin family. Directly or indirectly cross-linked to cornifelin (CNFN). Post-translationally, substrate of transglutaminase. Specific glutamines or lysines are cross-linked to keratins, desmoplakin and to inter involucrin molecules. In terms of tissue distribution, keratinocytes of epidermis and other stratified squamous epithelia.

It localises to the cytoplasm. Its function is as follows. Part of the insoluble cornified cell envelope (CE) of stratified squamous epithelia. The chain is Involucrin (IVL) from Canis lupus familiaris (Dog).